Consider the following 166-residue polypeptide: Putative pre-16S rRNA nuclease (166 aa).

The interval 1 to 24 (MPDTAAPTPDRPGPDDPGRGRRLG) is disordered.

It belongs to the YqgF nuclease family.

The protein resides in the cytoplasm. Functionally, could be a nuclease involved in processing of the 5'-end of pre-16S rRNA. This Mycobacteroides abscessus (strain ATCC 19977 / DSM 44196 / CCUG 20993 / CIP 104536 / JCM 13569 / NCTC 13031 / TMC 1543 / L948) (Mycobacterium abscessus) protein is Putative pre-16S rRNA nuclease.